The sequence spans 872 residues: Alanine--tRNA ligase (872 aa).

Zn(2+)-binding residues include histidine 563, histidine 567, cysteine 665, and histidine 669.

The protein belongs to the class-II aminoacyl-tRNA synthetase family. It depends on Zn(2+) as a cofactor.

It localises to the cytoplasm. The catalysed reaction is tRNA(Ala) + L-alanine + ATP = L-alanyl-tRNA(Ala) + AMP + diphosphate. Its function is as follows. Catalyzes the attachment of alanine to tRNA(Ala) in a two-step reaction: alanine is first activated by ATP to form Ala-AMP and then transferred to the acceptor end of tRNA(Ala). Also edits incorrectly charged Ser-tRNA(Ala) and Gly-tRNA(Ala) via its editing domain. The chain is Alanine--tRNA ligase from Bacteroides thetaiotaomicron (strain ATCC 29148 / DSM 2079 / JCM 5827 / CCUG 10774 / NCTC 10582 / VPI-5482 / E50).